Consider the following 634-residue polypeptide: Protein IcfG (634 aa).

Positions 306–361 (HHSTVPILDLTKASQAIAAGDLDYEININQGNRQDEIGILGNSFIYMKNQIKTLIA) constitute an HAMP domain. One can recognise a PPM-type phosphatase domain in the interval 385–633 (PISLPDLQQW…DDITMIAVYR (249 aa)).

Its function is as follows. Involved in cross-regulation of inorganic carbon and glucose metabolisms. In Synechocystis sp. (strain ATCC 27184 / PCC 6803 / Kazusa), this protein is Protein IcfG (icfG).